We begin with the raw amino-acid sequence, 65 residues long: Conotoxin Cal1.5 (65 aa).

An N-terminal signal peptide occupies residues 1-18; that stretch reads MRCLPVFIILLLLASTAA. Positions 19-49 are excised as a propeptide; that stretch reads VDVAGSKLKRRLERKPYQGSQAYVKKTAFGL. 2 disulfide bridges follow: C52–C62 and C53–C59. Position 61 is a 4-hydroxyproline (P61).

Belongs to the conotoxin T superfamily. In terms of tissue distribution, expressed by the venom duct.

Its subcellular location is the secreted. Its function is as follows. Probable neurotoxin with unknown target. Possibly targets ion channels. The chain is Conotoxin Cal1.5 from Californiconus californicus (California cone).